Here is a 1470-residue protein sequence, read N- to C-terminus: ABC transporter G family member 48 (1470 aa).

The interval 1 to 47 (MAAAPSASGRRSMSWGSSISQSFRQAEADDPFGRAASQQGHDDDEEN) is disordered. The span at 9-24 (GRRSMSWGSSISQSFR) shows a compositional bias: polar residues. In terms of domain architecture, ABC transporter 1 spans 172–445 (GLIGRFGSSN…FENAGFRCPE (274 aa)). 205–212 (GPPSSGKS) provides a ligand contact to ATP. Residues 523–736 (ESLRAVMSRE…SQQAISINEF (214 aa)) enclose the ABC transmembrane type-2 1 domain. 6 consecutive transmembrane segments (helical) span residues 541–561 (FIYI…MTVF), 577–597 (FLGA…AELQ), 629–649 (VPVS…VMGF), 660–680 (FIAF…LGAI), 686–706 (VANT…GFLI), and 772–792 (FWIS…LYIL). The disordered stretch occupies residues 828–852 (QIVHNNGASNTSATSSIPMSGSRST). Residues 832–843 (NNGASNTSATSS) are compositionally biased toward low complexity. The region spanning 869 to 1121 (LCFNHVNYYV…KLVEYFEAVP (253 aa)) is the ABC transporter 2 domain. 914–921 (GVSGAGKT) provides a ligand contact to ATP. Positions 1194-1408 (SQCIANFWKQ…TIYGVVASQF (215 aa)) constitute an ABC transmembrane type-2 2 domain. 7 consecutive transmembrane segments (helical) span residues 1215–1234 (AMRY…VFWQ), 1249–1271 (LGAT…QPVV), 1301–1321 (VIYN…MIGY), 1331–1351 (FMFF…MLVA), 1359–1379 (ANIL…FLVV), 1389–1409 (WYYW…SQFG), and 1439–1459 (FLGY…FIFG).

Belongs to the ABC transporter superfamily. ABCG family. PDR (TC 3.A.1.205) subfamily.

It is found in the membrane. Functionally, may be a general defense protein. The polypeptide is ABC transporter G family member 48 (Oryza sativa subsp. japonica (Rice)).